The following is a 78-amino-acid chain: Putative capsid protein ORF9 (78 aa).

Positions 1 to 29 are cleaved as a signal peptide; sequence MIKLVLLVAAIAIFGTGFITVIINQFTSA. The helical transmembrane segment at 52–72 threads the bilayer; sequence VLFSHPLMLTISSLYIVGFIV.

Belongs to the plectrovirus ORF9 family. Homomultimerizes.

It localises to the virion. It is found in the host membrane. Functionally, may self assemble to form a helical capsid wrapping up the viral genomic DNA. The virion assembly and budding take place at the host inner membrane. The chain is Putative capsid protein ORF9 from Spiroplasma virus SpV1-C74 (SpV1).